A 414-amino-acid chain; its full sequence is Esterase FrsA (414 aa).

This sequence belongs to the FrsA family.

The enzyme catalyses a carboxylic ester + H2O = an alcohol + a carboxylate + H(+). Catalyzes the hydrolysis of esters. The chain is Esterase FrsA from Salmonella choleraesuis (strain SC-B67).